Consider the following 263-residue polypeptide: Proteasome subunit beta type-5 (263 aa).

A propeptide spans 1 to 59 (removed in mature form); the sequence is MALASVLERPLSVNRRGFFGLGGRADLLDLGPGSPSDGLSLAAPSWGVPEEPRIEILHG. Residue Thr60 is the Nucleophile of the active site. Ala108 provides a ligand contact to bortezomib.

It belongs to the peptidase T1B family. In terms of assembly, the 26S proteasome consists of a 20S proteasome core and two 19S regulatory subunits. The 20S proteasome core is a barrel-shaped complex made of 28 subunits that are arranged in four stacked rings. The two outer rings are each formed by seven alpha subunits, and the two inner rings are formed by seven beta subunits. The proteolytic activity is exerted by three beta-subunits PSMB5, PSMB6 and PSMB7. Directly interacts with POMP. Interacts with ABCB1 and TAP1.

The protein localises to the cytoplasm. The protein resides in the nucleus. The catalysed reaction is Cleavage of peptide bonds with very broad specificity.. In terms of biological role, component of the 20S core proteasome complex involved in the proteolytic degradation of most intracellular proteins. This complex plays numerous essential roles within the cell by associating with different regulatory particles. Associated with two 19S regulatory particles, forms the 26S proteasome and thus participates in the ATP-dependent degradation of ubiquitinated proteins. The 26S proteasome plays a key role in the maintenance of protein homeostasis by removing misfolded or damaged proteins that could impair cellular functions, and by removing proteins whose functions are no longer required. Associated with the PA200 or PA28, the 20S proteasome mediates ubiquitin-independent protein degradation. This type of proteolysis is required in several pathways including spermatogenesis (20S-PA200 complex) or generation of a subset of MHC class I-presented antigenic peptides (20S-PA28 complex). Within the 20S core complex, PSMB5 displays a chymotrypsin-like activity. The polypeptide is Proteasome subunit beta type-5 (Bos taurus (Bovine)).